The sequence spans 431 residues: Glutamate-1-semialdehyde 2,1-aminomutase (431 aa).

The residue at position 269 (K269) is an N6-(pyridoxal phosphate)lysine.

The protein belongs to the class-III pyridoxal-phosphate-dependent aminotransferase family. HemL subfamily. In terms of assembly, homodimer. Pyridoxal 5'-phosphate serves as cofactor.

Its subcellular location is the cytoplasm. The catalysed reaction is (S)-4-amino-5-oxopentanoate = 5-aminolevulinate. It participates in porphyrin-containing compound metabolism; protoporphyrin-IX biosynthesis; 5-aminolevulinate from L-glutamyl-tRNA(Glu): step 2/2. This Tolumonas auensis (strain DSM 9187 / NBRC 110442 / TA 4) protein is Glutamate-1-semialdehyde 2,1-aminomutase.